Reading from the N-terminus, the 308-residue chain is Cell division protein ZipA (308 aa).

Residues Met-1 to Arg-5 are Periplasmic-facing. A helical transmembrane segment spans residues Leu-6 to Thr-26. Residues Ser-27–Asn-308 are Cytoplasmic-facing. Residues Phe-43 to Phe-90 are disordered. Residues Glu-59 to Pro-82 are compositionally biased toward basic and acidic residues.

This sequence belongs to the ZipA family. Interacts with FtsZ via their C-terminal domains.

The protein resides in the cell inner membrane. Essential cell division protein that stabilizes the FtsZ protofilaments by cross-linking them and that serves as a cytoplasmic membrane anchor for the Z ring. Also required for the recruitment to the septal ring of downstream cell division proteins. The protein is Cell division protein ZipA of Aliivibrio salmonicida (strain LFI1238) (Vibrio salmonicida (strain LFI1238)).